A 267-amino-acid chain; its full sequence is 2-keto-3-deoxy-L-rhamnonate aldolase (267 aa).

The Proton acceptor role is filled by H49. Q151 contacts substrate. Residue E153 participates in Mg(2+) binding. Substrate contacts are provided by A178 and D179. Residue D179 coordinates Mg(2+).

It belongs to the HpcH/HpaI aldolase family. KDR aldolase subfamily. As to quaternary structure, homohexamer. Requires Mg(2+) as cofactor.

It catalyses the reaction 2-dehydro-3-deoxy-L-rhamnonate = (S)-lactaldehyde + pyruvate. Functionally, catalyzes the reversible retro-aldol cleavage of 2-keto-3-deoxy-L-rhamnonate (KDR) to pyruvate and lactaldehyde. The sequence is that of 2-keto-3-deoxy-L-rhamnonate aldolase from Salmonella gallinarum (strain 287/91 / NCTC 13346).